The following is a 507-amino-acid chain: Wax ester synthase/diacylglycerol acyltransferase 5 (507 aa).

At 1–211 (MEIKIRRRRG…LKTSSRCYSR (211 aa)) the chain is on the cytoplasmic side. The active-site Proton acceptor is histidine 161. A helical transmembrane segment spans residues 212–232 (FFWLVMVLWSAALLVLNTVCD). The Lumenal portion of the chain corresponds to 233 to 507 (ALEFIATALF…VVVQERTSTQ (275 aa)). Asparagine 314 and asparagine 421 each carry an N-linked (GlcNAc...) asparagine glycan.

This sequence in the N-terminal section; belongs to the long-chain O-acyltransferase family. Mostly expressed in flowers and siliques.

Its subcellular location is the cell membrane. The protein resides in the endoplasmic reticulum membrane. It carries out the reaction a long chain fatty alcohol + a fatty acyl-CoA = a wax ester + CoA. It catalyses the reaction an acyl-CoA + a 1,2-diacyl-sn-glycerol = a triacyl-sn-glycerol + CoA. Its pathway is glycerolipid metabolism; triacylglycerol biosynthesis. It participates in lipid metabolism. Bifunctional wax ester synthase/diacylglycerol acyltransferase. Involved in cuticular wax biosynthesis. The polypeptide is Wax ester synthase/diacylglycerol acyltransferase 5 (Arabidopsis thaliana (Mouse-ear cress)).